The primary structure comprises 1444 residues: RNA-directed RNA polymerase P1 (1444 aa).

Residues 156 to 182 (SEEIQMDESQSDKRRRKKRMEKSRPVW) form a disordered region. The 208-residue stretch at 690–897 (LGVGFATLYQ…KTVISHISGE (208 aa)) folds into the RdRp catalytic domain.

The protein belongs to the reoviridae RNA-directed RNA polymerase family.

Its subcellular location is the virion. It localises to the host cytoplasm. The catalysed reaction is RNA(n) + a ribonucleoside 5'-triphosphate = RNA(n+1) + diphosphate. In terms of biological role, RNA-directed RNA polymerase that is involved in both transcription and genome replication. Together with the capping enzyme P5 and protein P7, forms an enzyme complex positioned near the channels situated at each of the five-fold vertices of the core. This chain is RNA-directed RNA polymerase P1 (S1), found in Rice dwarf virus (isolate Fujian) (RDV).